The sequence spans 406 residues: 3-isopropylmalate dehydrogenase, chloroplastic (406 aa).

Residues M1 to C34 constitute a chloroplast transit peptide. A Phosphoserine modification is found at S71. G117–E130 is a binding site for NAD(+). 4 residues coordinate substrate: R137, R147, R175, and D265. Mg(2+)-binding residues include D265, D289, and D293. G323–N335 provides a ligand contact to NAD(+).

The protein belongs to the isocitrate and isopropylmalate dehydrogenases family. As to quaternary structure, homodimer. Mg(2+) is required as a cofactor. The cofactor is Mn(2+).

Its subcellular location is the plastid. It is found in the chloroplast. It catalyses the reaction (2R,3S)-3-isopropylmalate + NAD(+) = 4-methyl-2-oxopentanoate + CO2 + NADH. It functions in the pathway amino-acid biosynthesis; L-leucine biosynthesis; L-leucine from 3-methyl-2-oxobutanoate: step 3/4. Catalyzes the oxidation of 3-carboxy-2-hydroxy-4-methylpentanoate (3-isopropylmalate) to 3-carboxy-4-methyl-2-oxopentanoate. The product decarboxylates to 4-methyl-2 oxopentanoate. This chain is 3-isopropylmalate dehydrogenase, chloroplastic, found in Brassica napus (Rape).